The chain runs to 80 residues: UPF0291 protein LACR_1198 (80 aa).

This sequence belongs to the UPF0291 family.

It is found in the cytoplasm. The polypeptide is UPF0291 protein LACR_1198 (Lactococcus lactis subsp. cremoris (strain SK11)).